Here is a 251-residue protein sequence, read N- to C-terminus: CDP-diacylglycerol pyrophosphatase (251 aa).

Residues 4 to 24 (AGLLFLVMIVIAVVASGIGYW) form a helical membrane-spanning segment.

It belongs to the Cdh family.

The protein localises to the cell inner membrane. The enzyme catalyses a CDP-1,2-diacyl-sn-glycerol + H2O = a 1,2-diacyl-sn-glycero-3-phosphate + CMP + 2 H(+). Its pathway is phospholipid metabolism; CDP-diacylglycerol degradation; phosphatidate from CDP-diacylglycerol: step 1/1. The polypeptide is CDP-diacylglycerol pyrophosphatase (Escherichia coli O8 (strain IAI1)).